Reading from the N-terminus, the 358-residue chain is Alanine racemase (358 aa).

Lys-35 serves as the catalytic Proton acceptor; specific for D-alanine. Lys-35 is modified (N6-(pyridoxal phosphate)lysine). A substrate-binding site is contributed by Arg-130. Catalysis depends on Tyr-255, which acts as the Proton acceptor; specific for L-alanine. Substrate is bound at residue Met-303.

This sequence belongs to the alanine racemase family. Requires pyridoxal 5'-phosphate as cofactor.

The catalysed reaction is L-alanine = D-alanine. Its pathway is amino-acid biosynthesis; D-alanine biosynthesis; D-alanine from L-alanine: step 1/1. Its function is as follows. Catalyzes the interconversion of L-alanine and D-alanine. May also act on other amino acids. This chain is Alanine racemase (alr), found in Shewanella sediminis (strain HAW-EB3).